A 248-amino-acid chain; its full sequence is Ras-like protein family member 11B (248 aa).

A small GTPase-like region spans residues 30–248 (ASSRVIKIAV…SSKVRTATSV (219 aa)). GTP-binding positions include 41–48 (GGSGVGKT), 88–99 (DTPGVQINEQNL), and 153–156 (NKAD). The segment at 206 to 228 (QNTGTSERRKNSIIPRPKSPNMQ) is disordered.

Belongs to the small GTPase superfamily. Ras family.

It catalyses the reaction GTP + H2O = GDP + phosphate + H(+). This chain is Ras-like protein family member 11B, found in Xenopus laevis (African clawed frog).